The following is a 437-amino-acid chain: Glutamate-1-semialdehyde 2,1-aminomutase (437 aa).

Lysine 274 carries the post-translational modification N6-(pyridoxal phosphate)lysine.

Belongs to the class-III pyridoxal-phosphate-dependent aminotransferase family. HemL subfamily. Homodimer. Pyridoxal 5'-phosphate is required as a cofactor.

It localises to the cytoplasm. It carries out the reaction (S)-4-amino-5-oxopentanoate = 5-aminolevulinate. It functions in the pathway porphyrin-containing compound metabolism; protoporphyrin-IX biosynthesis; 5-aminolevulinate from L-glutamyl-tRNA(Glu): step 2/2. The sequence is that of Glutamate-1-semialdehyde 2,1-aminomutase from Verminephrobacter eiseniae (strain EF01-2).